A 122-amino-acid polypeptide reads, in one-letter code: Small ribosomal subunit protein bS16 (122 aa).

The segment at 87–122 (VGKAKQAEARKAGAKNVAKQAAEAKAEETPADNTEA) is disordered.

This sequence belongs to the bacterial ribosomal protein bS16 family.

The polypeptide is Small ribosomal subunit protein bS16 (Prochlorococcus marinus (strain MIT 9303)).